Reading from the N-terminus, the 479-residue chain is Hydrogenase-4 component D (479 aa).

Transmembrane regions (helical) follow at residues 3-23 (NLAL…SFSP), 30-50 (WGVL…SAFY), 55-75 (VAVT…LVID), 80-100 (LILF…TGYL), 117-137 (AFLL…TLLG), 168-188 (ALLI…TLFL), 208-228 (LVYG…PMQA), 238-258 (TPIS…YIFA), 270-290 (VIGG…FLMY), 300-320 (LAWS…LSIF), 330-350 (IAYI…AGAL), 369-389 (LPLP…VPPF), 390-410 (NGFF…VEYW), 411-431 (ILLP…AWFI), and 458-478 (LVLI…ATWL).

This sequence belongs to the complex I subunit 5 family.

It localises to the cell inner membrane. Its function is as follows. Possible component of hydrogenase 4. The sequence is that of Hydrogenase-4 component D from Escherichia coli (strain K12).